We begin with the raw amino-acid sequence, 640 residues long: 1-deoxy-D-xylulose-5-phosphate synthase (640 aa).

Residues His77 and Ala118–Ala120 each bind thiamine diphosphate. Asp149 contributes to the Mg(2+) binding site. Thiamine diphosphate is bound by residues Gly150–Ser151, Asn178, Tyr287, and Glu369. Asn178 contributes to the Mg(2+) binding site.

This sequence belongs to the transketolase family. DXPS subfamily. Homodimer. Mg(2+) is required as a cofactor. It depends on thiamine diphosphate as a cofactor.

It carries out the reaction D-glyceraldehyde 3-phosphate + pyruvate + H(+) = 1-deoxy-D-xylulose 5-phosphate + CO2. The protein operates within metabolic intermediate biosynthesis; 1-deoxy-D-xylulose 5-phosphate biosynthesis; 1-deoxy-D-xylulose 5-phosphate from D-glyceraldehyde 3-phosphate and pyruvate: step 1/1. Functionally, catalyzes the acyloin condensation reaction between C atoms 2 and 3 of pyruvate and glyceraldehyde 3-phosphate to yield 1-deoxy-D-xylulose-5-phosphate (DXP). The protein is 1-deoxy-D-xylulose-5-phosphate synthase of Caulobacter vibrioides (strain NA1000 / CB15N) (Caulobacter crescentus).